We begin with the raw amino-acid sequence, 153 residues long: FAD synthase (153 aa).

ATP-binding positions include 9–10 (TF), 14–17 (HPGH), D97, and Y124.

The protein belongs to the archaeal FAD synthase family. In terms of assembly, homodimer. A divalent metal cation serves as cofactor.

It carries out the reaction FMN + ATP + H(+) = FAD + diphosphate. It participates in cofactor biosynthesis; FAD biosynthesis; FAD from FMN: step 1/1. Its function is as follows. Catalyzes the transfer of the AMP portion of ATP to flavin mononucleotide (FMN) to produce flavin adenine dinucleotide (FAD) coenzyme. The sequence is that of FAD synthase from Methanobrevibacter smithii (strain ATCC 35061 / DSM 861 / OCM 144 / PS).